Reading from the N-terminus, the 529-residue chain is Peptide chain release factor 3 (529 aa).

Residues 11–280 enclose the tr-type G domain; sequence AKRRTFAIIS…GLVEWAPAPM (270 aa). GTP contacts are provided by residues 20 to 27, 88 to 92, and 142 to 145; these read SHPDAGKT, DTPGH, and NKLD.

It belongs to the TRAFAC class translation factor GTPase superfamily. Classic translation factor GTPase family. PrfC subfamily.

Its subcellular location is the cytoplasm. Its function is as follows. Increases the formation of ribosomal termination complexes and stimulates activities of RF-1 and RF-2. It binds guanine nucleotides and has strong preference for UGA stop codons. It may interact directly with the ribosome. The stimulation of RF-1 and RF-2 is significantly reduced by GTP and GDP, but not by GMP. The protein is Peptide chain release factor 3 of Salmonella arizonae (strain ATCC BAA-731 / CDC346-86 / RSK2980).